Reading from the N-terminus, the 146-residue chain is Hemoglobin subunit beta-S/F (146 aa).

The residue at position 1 (Val1) is an N-acetylvaline. Positions His2 to His146 constitute a Globin domain. Ser44 carries the phosphoserine modification. Residue Lys59 is modified to N6-acetyllysine. His63 lines the heme b pocket. At Lys82 the chain carries N6-acetyllysine. His92 is a binding site for heme b. Residue Cys93 is modified to S-nitrosocysteine. Lys144 bears the N6-acetyllysine mark.

It belongs to the globin family. Heterotetramer of two alpha chains and two beta chains. Red blood cells.

In terms of biological role, involved in oxygen transport from the lung to the various peripheral tissues. This chain is Hemoglobin subunit beta-S/F, found in Urocitellus townsendii (Townsend's ground squirrel).